We begin with the raw amino-acid sequence, 125 residues long: Large ribosomal subunit protein eL8 (125 aa).

Belongs to the eukaryotic ribosomal protein eL8 family. As to quaternary structure, part of the 50S ribosomal subunit. Probably part of the RNase P complex.

It is found in the cytoplasm. Functionally, multifunctional RNA-binding protein that recognizes the K-turn motif in ribosomal RNA, the RNA component of RNase P, box H/ACA, box C/D and box C'/D' sRNAs. The protein is Large ribosomal subunit protein eL8 of Nanoarchaeum equitans (strain Kin4-M).